The chain runs to 509 residues: Hyaluronidase PH-20 (509 aa).

The first 35 residues, 1–35 (MGVLKFKHIFFRSFVKSSGVSQIVFTFLLIPCCLT), serve as a signal peptide directing secretion. Disulfide bonds link cysteine 60–cysteine 351 and cysteine 224–cysteine 238. The N-linked (GlcNAc...) asparagine glycan is linked to asparagine 82. The active-site Proton donor is glutamate 148. 4 N-linked (GlcNAc...) asparagine glycosylation sites follow: asparagine 166, asparagine 235, asparagine 254, and asparagine 368. Disulfide bonds link cysteine 376–cysteine 387, cysteine 381–cysteine 435, and cysteine 437–cysteine 464. A glycan (N-linked (GlcNAc...) asparagine) is linked at asparagine 393. The GPI-anchor amidated serine moiety is linked to residue serine 490. A propeptide spans 491-509 (ATMFIVSILFLIISSVASL) (removed in mature form).

It belongs to the glycosyl hydrolase 56 family. Post-translationally, N-glycosylated. In terms of tissue distribution, testis.

Its subcellular location is the cell membrane. It catalyses the reaction Random hydrolysis of (1-&gt;4)-linkages between N-acetyl-beta-D-glucosamine and D-glucuronate residues in hyaluronate.. In terms of biological role, involved in sperm-egg adhesion. Upon fertilization sperm must first penetrate a layer of cumulus cells that surrounds the egg before reaching the zona pellucida. The cumulus cells are embedded in a matrix containing hyaluronic acid which is formed prior to ovulation. This protein aids in penetrating the layer of cumulus cells by digesting hyaluronic acid. This Homo sapiens (Human) protein is Hyaluronidase PH-20 (SPAM1).